We begin with the raw amino-acid sequence, 599 residues long: Glucose-6-phosphate 1-dehydrogenase 3, chloroplastic (599 aa).

A compositionally biased stretch (low complexity) spans methionine 1–proline 18. The tract at residues methionine 1–histidine 23 is disordered. Residues methionine 1–serine 66 constitute a chloroplast transit peptide. At valine 67 the chain carries N-acetylvaline. NADP(+)-binding positions include glycine 119 to lysine 126 and arginine 153. Cysteine 171 and cysteine 179 form a disulfide bridge. Lysine 256 serves as a coordination point for NADP(+). Residues lysine 256, histidine 286 to lysine 290, glutamate 324, and aspartate 343 contribute to the D-glucose 6-phosphate site. The Proton acceptor role is filled by histidine 348. Lysine 441 contacts NADP(+). D-glucose 6-phosphate contacts are provided by lysine 444 and arginine 449. Residues arginine 454 and arginine 483 each contribute to the NADP(+) site. Glutamine 485 is a binding site for D-glucose 6-phosphate. NADP(+) is bound by residues tyrosine 491–lysine 493 and arginine 576.

The protein belongs to the glucose-6-phosphate dehydrogenase family. As to quaternary structure, forms homodimer. Interacts with G6PD1. Expressed in roots, flowers and siliques.

The protein resides in the plastid. The protein localises to the chloroplast stroma. The enzyme catalyses D-glucose 6-phosphate + NADP(+) = 6-phospho-D-glucono-1,5-lactone + NADPH + H(+). It functions in the pathway carbohydrate degradation; pentose phosphate pathway; D-ribulose 5-phosphate from D-glucose 6-phosphate (oxidative stage): step 1/3. With respect to regulation, regulated by metabolites. Post-translationally inactivated by cysteine-mediated redox modification via the ferredoxin-thioredoxin system in the light and this avoids futile cycles with photosynthetic CO2 fixation. Its function is as follows. Catalyzes the rate-limiting step of the oxidative pentose-phosphate pathway, which represents a route for the dissimilation of carbohydrates besides glycolysis. The main function of this enzyme is to provide reducing power (NADPH) and pentose phosphates for fatty acid and nucleic acid synthesis which are involved in membrane synthesis and cell division. This chain is Glucose-6-phosphate 1-dehydrogenase 3, chloroplastic, found in Arabidopsis thaliana (Mouse-ear cress).